The chain runs to 122 residues: UPF0344 protein BPUM_1008 (122 aa).

A run of 4 helical transmembrane segments spans residues 5 to 25, 33 to 53, 60 to 80, and 93 to 113; these read LHIT…ALAG, IVHM…VELY, IPGF…VIGF, and SVTG…LLGL.

Belongs to the UPF0344 family.

The protein resides in the cell membrane. The sequence is that of UPF0344 protein BPUM_1008 from Bacillus pumilus (strain SAFR-032).